The following is a 319-amino-acid chain: HPr kinase/phosphorylase (319 aa).

Active-site residues include His-141 and Lys-162. 156–163 (GNSGVGKS) is an ATP binding site. Ser-163 lines the Mg(2+) pocket. Catalysis depends on Asp-180, which acts as the Proton acceptor; for phosphorylation activity. Proton donor; for dephosphorylation activity. Residues 204-213 (MEIRGIGIID) are important for the catalytic mechanism of both phosphorylation and dephosphorylation. Residue Glu-205 participates in Mg(2+) binding. The active site involves Arg-246. The tract at residues 267-272 (PVKVGR) is important for the catalytic mechanism of dephosphorylation.

Belongs to the HPrK/P family. In terms of assembly, homohexamer. Mg(2+) is required as a cofactor.

The enzyme catalyses [HPr protein]-L-serine + ATP = [HPr protein]-O-phospho-L-serine + ADP + H(+). The catalysed reaction is [HPr protein]-O-phospho-L-serine + phosphate + H(+) = [HPr protein]-L-serine + diphosphate. Catalyzes the ATP- as well as the pyrophosphate-dependent phosphorylation of a specific serine residue in HPr, a phosphocarrier protein of the phosphoenolpyruvate-dependent sugar phosphotransferase system (PTS). HprK/P also catalyzes the pyrophosphate-producing, inorganic phosphate-dependent dephosphorylation (phosphorolysis) of seryl-phosphorylated HPr (P-Ser-HPr). The two antagonistic activities of HprK/P are regulated by several intracellular metabolites, which change their concentration in response to the absence or presence of rapidly metabolisable carbon sources (glucose, fructose, etc.) in the growth medium. Therefore, by controlling the phosphorylation state of HPr, HPrK/P is a sensor enzyme that plays a major role in the regulation of carbon metabolism and sugar transport: it mediates carbon catabolite repression (CCR), and regulates PTS-catalyzed carbohydrate uptake and inducer exclusion. This chain is HPr kinase/phosphorylase, found in Lactobacillus johnsonii (strain CNCM I-12250 / La1 / NCC 533).